The following is a 518-amino-acid chain: Nuclear receptor ROR-gamma (518 aa).

Residues M1–P30 are modulating. 2 consecutive NR C4-type zinc fingers follow at residues C31–C51 and C67–C91. A DNA-binding region (nuclear receptor) is located at residues C31–M96. Disordered stretches follow at residues R105 to G183 and H238 to S258. The span at K109–V118 shows a compositional bias: basic and acidic residues. A compositionally biased stretch (low complexity) spans Q119–Q130. Residues E269 to T508 enclose the NR LBD domain. Residues L501–F506 carry the AF-2 motif.

The protein belongs to the nuclear hormone receptor family. NR1 subfamily. In terms of assembly, interacts (via AF-2 motif) with the coactivators NCOA1, NCOA2 and PPARGC1A (via LXXLL motif). Interacts with the corepressor NCOR1. Interacts with CRY1. Interacts (via AF-2 motif) with PROX1. Interacts with FOXP3. Interacts with NR0B2.

It localises to the nucleus. Nuclear receptor that binds DNA as a monomer to ROR response elements (RORE) containing a single core motif half-site 5'-AGGTCA-3' preceded by a short A-T-rich sequence. Key regulator of cellular differentiation, immunity, peripheral circadian rhythm as well as lipid, steroid, xenobiotics and glucose metabolism. Considered to have intrinsic transcriptional activity, have some natural ligands like oxysterols that act as agonists (25-hydroxycholesterol) or inverse agonists (7-oxygenated sterols), enhancing or repressing the transcriptional activity, respectively. Recruits distinct combinations of cofactors to target gene regulatory regions to modulate their transcriptional expression, depending on the tissue, time and promoter contexts. Regulates the circadian expression of clock genes such as CRY1, BMAL1 and NR1D1 in peripheral tissues and in a tissue-selective manner. Competes with NR1D1 for binding to their shared DNA response element on some clock genes such as BMAL1, CRY1 and NR1D1 itself, resulting in NR1D1-mediated repression or RORC-mediated activation of the expression, leading to the circadian pattern of clock genes expression. Therefore influences the period length and stability of the clock. Involved in the regulation of the rhythmic expression of genes involved in glucose and lipid metabolism, including PLIN2 and AVPR1A. Negative regulator of adipocyte differentiation through the regulation of early phase genes expression, such as MMP3. Controls adipogenesis as well as adipocyte size and modulates insulin sensitivity in obesity. In liver, has specific and redundant functions with RORA as positive or negative modulator of expression of genes encoding phase I and Phase II proteins involved in the metabolism of lipids, steroids and xenobiotics, such as SULT1E1. Also plays a role in the regulation of hepatocyte glucose metabolism through the regulation of G6PC1 and PCK1. Essential for thymopoiesis and the development of several secondary lymphoid tissues, including lymph nodes and Peyer's patches. Required for the generation of LTi (lymphoid tissue inducer) cells. Regulates thymocyte survival through DNA-binding on ROREs of target gene promoter regions and recruitment of coactivaros via the AF-2. Also plays a key role, downstream of IL6 and TGFB and synergistically with RORA, for lineage specification of uncommitted CD4(+) T-helper (T(H)) cells into T(H)17 cells, antagonizing the T(H)1 program. Probably regulates IL17 and IL17F expression on T(H) by binding to the essential enhancer conserved non-coding sequence 2 (CNS2) in the IL17-IL17F locus. May also play a role in the pre-TCR activation cascade leading to the maturation of alpha/beta T-cells and may participate in the regulation of DNA accessibility in the TCR-J(alpha) locus. Regulates the rhythmic expression of PROX1 and promotes its nuclear localization. Plays an indispensable role in the induction of IFN-gamma dependent anti-mycobacterial systemic immunity. This is Nuclear receptor ROR-gamma (RORC) from Pongo abelii (Sumatran orangutan).